Reading from the N-terminus, the 359-residue chain is Ribosomal RNA small subunit methyltransferase H (359 aa).

Residues Ala-39–His-41, Asp-58, Phe-87, Asp-108, and Gln-115 each bind S-adenosyl-L-methionine. The interval Ile-339–Gly-359 is disordered. A compositionally biased stretch (basic residues) spans Asn-350–Gly-359.

It belongs to the methyltransferase superfamily. RsmH family.

The protein localises to the cytoplasm. The enzyme catalyses cytidine(1402) in 16S rRNA + S-adenosyl-L-methionine = N(4)-methylcytidine(1402) in 16S rRNA + S-adenosyl-L-homocysteine + H(+). Functionally, specifically methylates the N4 position of cytidine in position 1402 (C1402) of 16S rRNA. The sequence is that of Ribosomal RNA small subunit methyltransferase H from Bifidobacterium longum subsp. infantis (strain ATCC 15697 / DSM 20088 / JCM 1222 / NCTC 11817 / S12).